Here is a 416-residue protein sequence, read N- to C-terminus: CinA-like protein (416 aa).

It belongs to the CinA family.

This Trichormus variabilis (strain ATCC 29413 / PCC 7937) (Anabaena variabilis) protein is CinA-like protein.